Reading from the N-terminus, the 56-residue chain is Conotoxin Cal6.41c (56 aa).

Positions 1–23 (MSGSGAMLLGLLILVAMATSLDT) are cleaved as a signal peptide. 3 disulfide bridges follow: Cys27–Cys41, Cys33–Cys50, and Cys40–Cys54.

In terms of tissue distribution, expressed by the venom duct.

The protein localises to the secreted. Functionally, probable neurotoxin. This Californiconus californicus (California cone) protein is Conotoxin Cal6.41c.